Reading from the N-terminus, the 96-residue chain is Citrate lyase acyl carrier protein (96 aa).

Ser-14 carries the post-translational modification O-(phosphoribosyl dephospho-coenzyme A)serine.

It belongs to the CitD family. Oligomer with a subunit composition of (alpha,beta,gamma)6.

It localises to the cytoplasm. Functionally, covalent carrier of the coenzyme of citrate lyase. The protein is Citrate lyase acyl carrier protein of Pectobacterium atrosepticum (strain SCRI 1043 / ATCC BAA-672) (Erwinia carotovora subsp. atroseptica).